The sequence spans 481 residues: ATP synthase subunit beta (481 aa).

G154–T161 is a binding site for ATP.

Belongs to the ATPase alpha/beta chains family. F-type ATPases have 2 components, CF(1) - the catalytic core - and CF(0) - the membrane proton channel. CF(1) has five subunits: alpha(3), beta(3), gamma(1), delta(1), epsilon(1). CF(0) has three main subunits: a(1), b(2) and c(9-12). The alpha and beta chains form an alternating ring which encloses part of the gamma chain. CF(1) is attached to CF(0) by a central stalk formed by the gamma and epsilon chains, while a peripheral stalk is formed by the delta and b chains.

It is found in the cell inner membrane. The enzyme catalyses ATP + H2O + 4 H(+)(in) = ADP + phosphate + 5 H(+)(out). Functionally, produces ATP from ADP in the presence of a proton gradient across the membrane. The catalytic sites are hosted primarily by the beta subunits. The sequence is that of ATP synthase subunit beta from Novosphingobium aromaticivorans (strain ATCC 700278 / DSM 12444 / CCUG 56034 / CIP 105152 / NBRC 16084 / F199).